Here is a 541-residue protein sequence, read N- to C-terminus: Chaperonin GroEL 2 (541 aa).

ATP is bound by residues 29–32 (TLGP), 86–90 (DGTTT), Gly-413, and Asp-492.

This sequence belongs to the chaperonin (HSP60) family. As to quaternary structure, forms a cylinder of 14 subunits composed of two heptameric rings stacked back-to-back. Interacts with the co-chaperonin GroES.

The protein resides in the cytoplasm. The enzyme catalyses ATP + H2O + a folded polypeptide = ADP + phosphate + an unfolded polypeptide.. Together with its co-chaperonin GroES, plays an essential role in assisting protein folding. The GroEL-GroES system forms a nano-cage that allows encapsulation of the non-native substrate proteins and provides a physical environment optimized to promote and accelerate protein folding. In Nocardia farcinica (strain IFM 10152), this protein is Chaperonin GroEL 2.